The sequence spans 361 residues: Molybdenum import ATP-binding protein ModC 1 (361 aa).

The ABC transporter domain maps to 1–237; the sequence is MPADGIRARF…LDLPTAFHED (237 aa). Position 35-42 (35-42) interacts with ATP; that stretch reads GHSGSGKT. In terms of domain architecture, Mop spans 296–361; it reads DSSITNVLPA…AQIKAVALLG (66 aa).

This sequence belongs to the ABC transporter superfamily. Molybdate importer (TC 3.A.1.8) family. The complex is composed of two ATP-binding proteins (ModC), two transmembrane proteins (ModB) and a solute-binding protein (ModA).

The protein localises to the cell inner membrane. The enzyme catalyses molybdate(out) + ATP + H2O = molybdate(in) + ADP + phosphate + H(+). In terms of biological role, part of the ABC transporter complex ModABC involved in molybdenum import. Responsible for energy coupling to the transport system. The polypeptide is Molybdenum import ATP-binding protein ModC 1 (Azotobacter vinelandii).